A 243-amino-acid polypeptide reads, in one-letter code: Mannosyl-3-phosphoglycerate phosphatase (243 aa).

The active-site Nucleophile is the Asp8. Mg(2+) is bound by residues Asp8, Asp10, Ser169, and Asp204.

Belongs to the HAD-like hydrolase superfamily. MPGP family. Mg(2+) is required as a cofactor.

The protein localises to the cytoplasm. It carries out the reaction 2-O-(alpha-D-mannosyl)-3-phosphoglycerate + H2O = (2R)-2-O-(alpha-D-mannosyl)-glycerate + phosphate. It functions in the pathway carbohydrate biosynthesis; 2-(alpha-D-mannosyl)-D-glycerate biosynthesis; 2-(alpha-D-mannosyl)-D-glycerate from GDP-alpha-D-mannose (MPG route): step 2/2. Functionally, hydrolyzes mannosyl-3-phosphoglycerate (MPG) to form the osmolyte mannosylglycerate (MG). The enzyme is absolutely specific for MPG. The sequence is that of Mannosyl-3-phosphoglycerate phosphatase from Pyrococcus horikoshii (strain ATCC 700860 / DSM 12428 / JCM 9974 / NBRC 100139 / OT-3).